The sequence spans 458 residues: Argininosuccinate lyase (458 aa).

This sequence belongs to the lyase 1 family. Argininosuccinate lyase subfamily.

It localises to the cytoplasm. The enzyme catalyses 2-(N(omega)-L-arginino)succinate = fumarate + L-arginine. The protein operates within amino-acid biosynthesis; L-arginine biosynthesis; L-arginine from L-ornithine and carbamoyl phosphate: step 3/3. The sequence is that of Argininosuccinate lyase from Glaesserella parasuis serovar 5 (strain SH0165) (Haemophilus parasuis).